The following is a 413-amino-acid chain: Lipoyl synthase, mitochondrial (413 aa).

Residues 1–33 constitute a mitochondrion transit peptide; that stretch reads MAAATNRFRALYSSSRVATPQAGSASYLSYRGY. Cys-133, Cys-138, Cys-144, Cys-164, Cys-168, Cys-171, and Ser-379 together coordinate [4Fe-4S] cluster. One can recognise a Radical SAM core domain in the interval 147–368; that stretch reads GGDKAAATAT…RQRALDMGFL (222 aa).

The protein belongs to the radical SAM superfamily. Lipoyl synthase family. It depends on [4Fe-4S] cluster as a cofactor.

Its subcellular location is the mitochondrion. The enzyme catalyses [[Fe-S] cluster scaffold protein carrying a second [4Fe-4S](2+) cluster] + N(6)-octanoyl-L-lysyl-[protein] + 2 oxidized [2Fe-2S]-[ferredoxin] + 2 S-adenosyl-L-methionine + 4 H(+) = [[Fe-S] cluster scaffold protein] + N(6)-[(R)-dihydrolipoyl]-L-lysyl-[protein] + 4 Fe(3+) + 2 hydrogen sulfide + 2 5'-deoxyadenosine + 2 L-methionine + 2 reduced [2Fe-2S]-[ferredoxin]. It functions in the pathway protein modification; protein lipoylation via endogenous pathway; protein N(6)-(lipoyl)lysine from octanoyl-[acyl-carrier-protein]: step 2/2. Catalyzes the radical-mediated insertion of two sulfur atoms into the C-6 and C-8 positions of the octanoyl moiety bound to the lipoyl domains of lipoate-dependent enzymes, thereby converting the octanoylated domains into lipoylated derivatives. The protein is Lipoyl synthase, mitochondrial of Emericella nidulans (strain FGSC A4 / ATCC 38163 / CBS 112.46 / NRRL 194 / M139) (Aspergillus nidulans).